Reading from the N-terminus, the 663-residue chain is Meiotically up-regulated gene 60 protein (663 aa).

One can recognise a KH domain in the interval 578–644 (PAEMHFYVPE…SENLWAVRSL (67 aa)).

The protein resides in the cytoplasm. The protein localises to the nucleus. It is found in the cytoskeleton. It localises to the microtubule organizing center. Its subcellular location is the spindle pole body. Its function is as follows. Has a role in meiosis. This chain is Meiotically up-regulated gene 60 protein (mug60), found in Schizosaccharomyces pombe (strain 972 / ATCC 24843) (Fission yeast).